The chain runs to 137 residues: Small ribosomal subunit protein uS19 (137 aa).

The protein belongs to the universal ribosomal protein uS19 family.

In terms of biological role, protein S19 forms a complex with S13 that binds strongly to the 16S ribosomal RNA. The chain is Small ribosomal subunit protein uS19 from Methanospirillum hungatei JF-1 (strain ATCC 27890 / DSM 864 / NBRC 100397 / JF-1).